Consider the following 561-residue polypeptide: Transmembrane protein 209 (561 aa).

A phosphoserine mark is found at serine 9 and serine 11. A helical transmembrane segment spans residues 28–48 (VVLAWGLLNVSMAGMIYTEMT). The N-linked (GlcNAc...) asparagine glycan is linked to asparagine 57. Residues 60 to 80 (YWPLWYIELALASLFSLNALF) traverse the membrane as a helical segment. Serine 98 bears the Phosphoserine mark. 2 disordered regions span residues 119–157 (DLAATQIPPAPPSPSIQGQSVLSYSPSRSPSTSPKFTTS) and 195–234 (FSPSPPSPYPTTVGPVESSGLRSRYRSSPTVYNSPTDKED). The segment covering 133–157 (SIQGQSVLSYSPSRSPSTSPKFTTS) has biased composition (low complexity). Serine 201, serine 222, and serine 248 each carry phosphoserine. Over residues 220 to 229 (RSSPTVYNSP) the composition is skewed to polar residues. Residues 250 to 271 (EEKQHRVKLGSPDSTSPSSSPT) are disordered. Over residues 260-271 (SPDSTSPSSSPT) the composition is skewed to low complexity. N-linked (GlcNAc...) asparagine glycosylation occurs at asparagine 274. Serine 278 carries the phosphoserine modification.

Interacts with NUP205. In terms of tissue distribution, expressed in the testis.

It localises to the membrane. Its subcellular location is the nucleus envelope. It is found in the golgi apparatus. The protein localises to the cytoplasm. Nuclear envelope protein which in association with NUP205, may be involved in nuclear transport of various nuclear proteins in addition to MYC. This is Transmembrane protein 209 (TMEM209) from Homo sapiens (Human).